We begin with the raw amino-acid sequence, 1071 residues long: ATP-dependent helicase/deoxyribonuclease subunit B (1071 aa).

It belongs to the helicase family. AddB/RexB type 2 subfamily. In terms of assembly, heterodimer of AddA and RexB. Requires Mg(2+) as cofactor.

Functionally, the heterodimer acts as both an ATP-dependent DNA helicase and an ATP-dependent, dual-direction single-stranded exonuclease. Recognizes the chi site generating a DNA molecule suitable for the initiation of homologous recombination. This subunit has 5' -&gt; 3' nuclease activity but not helicase activity. The polypeptide is ATP-dependent helicase/deoxyribonuclease subunit B (Streptococcus pyogenes serotype M18 (strain MGAS8232)).